The chain runs to 463 residues: Glutamate--tRNA ligase 1 (463 aa).

Residues 10-20 (PSPTGYLHIGG) carry the 'HIGH' region motif. Positions 238-242 (KLSKR) match the 'KMSKS' region motif. Lysine 241 is a binding site for ATP.

This sequence belongs to the class-I aminoacyl-tRNA synthetase family. Glutamate--tRNA ligase type 1 subfamily. In terms of assembly, monomer.

Its subcellular location is the cytoplasm. It catalyses the reaction tRNA(Glu) + L-glutamate + ATP = L-glutamyl-tRNA(Glu) + AMP + diphosphate. In terms of biological role, catalyzes the attachment of glutamate to tRNA(Glu) in a two-step reaction: glutamate is first activated by ATP to form Glu-AMP and then transferred to the acceptor end of tRNA(Glu). This Helicobacter pylori (strain ATCC 700392 / 26695) (Campylobacter pylori) protein is Glutamate--tRNA ligase 1.